A 121-amino-acid chain; its full sequence is Keratin-associated protein 1-4 (121 aa).

It belongs to the KRTAP type 1 family. In terms of assembly, interacts with hair keratins. In terms of tissue distribution, expressed in the middle/upper portions of the hair cortex, in the region termed the keratogenous zone.

In terms of biological role, in the hair cortex, hair keratin intermediate filaments are embedded in an interfilamentous matrix, consisting of hair keratin-associated proteins (KRTAP), which are essential for the formation of a rigid and resistant hair shaft through their extensive disulfide bond cross-linking with abundant cysteine residues of hair keratins. The matrix proteins include the high-sulfur and high-glycine-tyrosine keratins. This chain is Keratin-associated protein 1-4 (KRTAP1-4), found in Homo sapiens (Human).